We begin with the raw amino-acid sequence, 250 residues long: Putative endonuclease (250 aa).

Putative endonuclease. The protein is Putative endonuclease of Escherichia coli (Enterobacteria phage T5).